A 329-amino-acid polypeptide reads, in one-letter code: 4-hydroxythreonine-4-phosphate dehydrogenase (329 aa).

Substrate contacts are provided by histidine 136 and threonine 137. 3 residues coordinate a divalent metal cation: histidine 166, histidine 211, and histidine 266. The substrate site is built by lysine 274, asparagine 283, and arginine 292.

This sequence belongs to the PdxA family. As to quaternary structure, homodimer. It depends on Zn(2+) as a cofactor. Mg(2+) serves as cofactor. Co(2+) is required as a cofactor.

Its subcellular location is the cytoplasm. The enzyme catalyses 4-(phosphooxy)-L-threonine + NAD(+) = 3-amino-2-oxopropyl phosphate + CO2 + NADH. Its pathway is cofactor biosynthesis; pyridoxine 5'-phosphate biosynthesis; pyridoxine 5'-phosphate from D-erythrose 4-phosphate: step 4/5. Its function is as follows. Catalyzes the NAD(P)-dependent oxidation of 4-(phosphooxy)-L-threonine (HTP) into 2-amino-3-oxo-4-(phosphooxy)butyric acid which spontaneously decarboxylates to form 3-amino-2-oxopropyl phosphate (AHAP). This is 4-hydroxythreonine-4-phosphate dehydrogenase from Shigella sonnei (strain Ss046).